A 151-amino-acid polypeptide reads, in one-letter code: Caveolin-3 (151 aa).

Residues 1 to 83 (MMTEEHTDLE…RLLSTLLGVP (83 aa)) are Cytoplasmic-facing. A Glycyl lysine isopeptide (Lys-Gly) (interchain with G-Cter in SUMO3) cross-link involves residue Lys38. An intramembrane region (helical) is located at residues 84 to 104 (LALLWGFLFACISFCHIWAVV). The Cytoplasmic segment spans residues 105-151 (PCIKSYLIEIQCISHIYSLCIRTFCNPLFAALGQVCSNIKVVLRREG).

It belongs to the caveolin family. Homooligomer. Interacts with DYSF. Interacts with DLG1 and KCNA5; forms a ternary complex. Interacts with DAG1 (via its C-terminal); the interaction prevents binding of DAG1 with DMD. Interacts with TRIM72. Interacts with MUSK; may regulate MUSK signaling. Interacts with POPDC1. Interacts with CAVIN1, CAVIN2 and CAVIN4. In terms of processing, sumoylation with SUMO3 by PIAS4 may reduce agonist-induced internalization and desensitization of adrenergic receptor ABRD2. In terms of tissue distribution, expressed predominantly in muscle.

It is found in the golgi apparatus membrane. The protein localises to the cell membrane. The protein resides in the membrane. Its subcellular location is the caveola. It localises to the sarcolemma. Its function is as follows. May act as a scaffolding protein within caveolar membranes. Interacts directly with G-protein alpha subunits and can functionally regulate their activity. May also regulate voltage-gated potassium channels. Plays a role in the sarcolemma repair mechanism of both skeletal muscle and cardiomyocytes that permits rapid resealing of membranes disrupted by mechanical stress. Mediates the recruitment of CAVIN2 and CAVIN3 proteins to the caveolae. The protein is Caveolin-3 (Cav3) of Rattus norvegicus (Rat).